A 275-amino-acid polypeptide reads, in one-letter code: NAD kinase (275 aa).

Catalysis depends on D68, which acts as the Proton acceptor. NAD(+)-binding positions include 68–69 (DG), R73, 136–137 (NE), K147, R164, D166, 177–182 (TAYAMS), A201, and Q236.

Belongs to the NAD kinase family. A divalent metal cation serves as cofactor.

The protein localises to the cytoplasm. The catalysed reaction is NAD(+) + ATP = ADP + NADP(+) + H(+). In terms of biological role, involved in the regulation of the intracellular balance of NAD and NADP, and is a key enzyme in the biosynthesis of NADP. Catalyzes specifically the phosphorylation on 2'-hydroxyl of the adenosine moiety of NAD to yield NADP. This chain is NAD kinase, found in Methanosarcina barkeri (strain Fusaro / DSM 804).